A 289-amino-acid polypeptide reads, in one-letter code: tRNA pseudouridine synthase B (289 aa).

Residue Asp38 is the Nucleophile of the active site.

Belongs to the pseudouridine synthase TruB family. Type 1 subfamily.

The catalysed reaction is uridine(55) in tRNA = pseudouridine(55) in tRNA. In terms of biological role, responsible for synthesis of pseudouridine from uracil-55 in the psi GC loop of transfer RNAs. The polypeptide is tRNA pseudouridine synthase B (Clostridium novyi (strain NT)).